The sequence spans 883 residues: Phosphoenolpyruvate carboxylase (883 aa).

Active-site residues include histidine 141 and lysine 547.

This sequence belongs to the PEPCase type 1 family. Mg(2+) serves as cofactor.

The enzyme catalyses oxaloacetate + phosphate = phosphoenolpyruvate + hydrogencarbonate. In terms of biological role, forms oxaloacetate, a four-carbon dicarboxylic acid source for the tricarboxylic acid cycle. The sequence is that of Phosphoenolpyruvate carboxylase from Chromohalobacter salexigens (strain ATCC BAA-138 / DSM 3043 / CIP 106854 / NCIMB 13768 / 1H11).